The primary structure comprises 78 residues: Translational regulator CsrA (78 aa).

The protein belongs to the CsrA/RsmA family. Homodimer; the beta-strands of each monomer intercalate to form a hydrophobic core, while the alpha-helices form wings that extend away from the core.

It is found in the cytoplasm. A translational regulator that binds mRNA to regulate translation initiation and/or mRNA stability. Usually binds in the 5'-UTR at or near the Shine-Dalgarno sequence preventing ribosome-binding, thus repressing translation. Its main target seems to be the major flagellin gene, while its function is anatagonized by FliW. This is Translational regulator CsrA from Borrelia turicatae (strain 91E135).